Reading from the N-terminus, the 1043-residue chain is Peroxisomal ATPase PEX1 (1043 aa).

Positions 453–626 are AAA-cassette D1; it reads ATPAIILDGK…SKNQIMKLNR (174 aa). ATP is bound by residues 461 to 468 and 738 to 745; these read GKQGIGKT and GYPGCGKT. The AAA-cassette D2 stretch occupies residues 733–926; that stretch reads GILLYGYPGC…CYNAYLKSVH (194 aa).

It belongs to the AAA ATPase family. As to quaternary structure, interacts with PEX6; forming the PEX1-PEX6 AAA ATPase complex, which is composed of a heterohexamer formed by a trimer of PEX1-PEX6 dimers. The PEX1-PEX6 heterooligomers associate with the peroxisomal importomer via interaction of PEX6 with the peroxisomal membrane anchor PEX15.

The protein localises to the cytoplasm. It localises to the cytosol. It is found in the peroxisome membrane. The enzyme catalyses ATP + H2O = ADP + phosphate + H(+). In terms of biological role, component of the PEX1-PEX6 AAA ATPase complex, a protein dislocase complex that mediates the ATP-dependent extraction of the PEX5 receptor from peroxisomal membranes, an essential step for PEX5 recycling. Specifically recognizes PEX5 monoubiquitinated at 'Cys-6', and pulls it out of the peroxisome lumen through the PEX2-PEX10-PEX12 retrotranslocation channel. Extraction by the PEX1-PEX6 AAA ATPase complex is accompanied by unfolding of the TPR repeats and release of bound cargo from PEX5. The sequence is that of Peroxisomal ATPase PEX1 from Saccharomyces cerevisiae (strain ATCC 204508 / S288c) (Baker's yeast).